Reading from the N-terminus, the 68-residue chain is Beta-defensin 1 (68 aa).

Residues 1–21 (MRTSYLLLFTLCLLLSEMASG) form the signal peptide. Residues 22 to 32 (DNFLTGLGHRS) constitute a propeptide that is removed on maturation. 3 cysteine pairs are disulfide-bonded: cysteine 37–cysteine 66, cysteine 44–cysteine 59, and cysteine 49–cysteine 67.

This sequence belongs to the beta-defensin family. Monomer. Homodimer.

The protein resides in the secreted. It localises to the membrane. Its function is as follows. Has bactericidal activity. May act as a ligand for C-C chemokine receptor CCR6. Positively regulates the sperm motility and bactericidal activity in a CCR6-dependent manner. Binds to CCR6 and triggers Ca2+ mobilization in the sperm which is important for its motility. In Allochrocebus preussi (Preuss's monkey), this protein is Beta-defensin 1 (DEFB1).